A 121-amino-acid polypeptide reads, in one-letter code: Small ribosomal subunit protein uS13 (121 aa).

Residues 97–121 (VRGQRTRTNARTRRGARKTVAGKKK) form a disordered region. The segment covering 100–121 (QRTRTNARTRRGARKTVAGKKK) has biased composition (basic residues).

It belongs to the universal ribosomal protein uS13 family. As to quaternary structure, part of the 30S ribosomal subunit. Forms a loose heterodimer with protein S19. Forms two bridges to the 50S subunit in the 70S ribosome.

Functionally, located at the top of the head of the 30S subunit, it contacts several helices of the 16S rRNA. In the 70S ribosome it contacts the 23S rRNA (bridge B1a) and protein L5 of the 50S subunit (bridge B1b), connecting the 2 subunits; these bridges are implicated in subunit movement. Contacts the tRNAs in the A and P-sites. This chain is Small ribosomal subunit protein uS13, found in Prochlorococcus marinus (strain MIT 9303).